A 285-amino-acid polypeptide reads, in one-letter code: MKRIGIYAKCNHPDAVMVARDVVGWLRGRGLEVFLEKKLAQDVGDAEQSHDRGSIPGMVDLIIVLGGDGTLISVARQVCGRDVPILGVNLGSLGFLTEITRGELYLSLEKVLKGEFSLSDRMMLEAVVWRHGLEAGRFSVLNDVVINKGAIARIIDMEVSVDTAYLTTFKSDGLIIATPTGSTAYNLSAGGPIISPGLHCLVVTPICPHMLANRPLIVSDTACIRIEMKLRDQDVVLTADGQVGMALEAGDVVEIRKADRCTRLIKSPSKEYFEVLRTKLGWGER.

Residue D68 is the Proton acceptor of the active site. NAD(+)-binding positions include 68–69, 142–143, R153, K170, D172, 183–188, and Q242; these read DG, ND, and TAYNLS.

It belongs to the NAD kinase family. It depends on a divalent metal cation as a cofactor.

It localises to the cytoplasm. The catalysed reaction is NAD(+) + ATP = ADP + NADP(+) + H(+). In terms of biological role, involved in the regulation of the intracellular balance of NAD and NADP, and is a key enzyme in the biosynthesis of NADP. Catalyzes specifically the phosphorylation on 2'-hydroxyl of the adenosine moiety of NAD to yield NADP. The chain is NAD kinase from Syntrophotalea carbinolica (strain DSM 2380 / NBRC 103641 / GraBd1) (Pelobacter carbinolicus).